The primary structure comprises 509 residues: Major envelope glycoprotein (509 aa).

Positions 1-17 are cleaved as a signal peptide; sequence MVRTAVLILLLVRFSEP. N34, N156, N194, N351, N381, and N423 each carry an N-linked (GlcNAc...) asparagine; by host glycan. S479 is lipidated: O-palmitoyl serine; by host. The chain crosses the membrane as a helical span at residues 480 to 502; it reads FMLGHAFSFMLTVGVIIFLFCMV. An N-linked (GlcNAc...) asparagine; by host glycan is attached at N504.

It belongs to the baculoviridae gp64 family. Post-translationally, palmitoylated.

It localises to the virion membrane. The protein resides in the host cell membrane. In terms of biological role, envelope phosphoglycoprotein which mediates the fusion of viral and host endosomal membranes leading to virus entry into the host cell. The protein is Major envelope glycoprotein (GP67) of Choristoneura fumiferana nuclear polyhedrosis virus (CfMNPV).